An 867-amino-acid polypeptide reads, in one-letter code: Alanine--tRNA ligase (867 aa).

Zn(2+) contacts are provided by His555, His559, Cys657, and His661.

This sequence belongs to the class-II aminoacyl-tRNA synthetase family. Zn(2+) is required as a cofactor.

It localises to the cytoplasm. It carries out the reaction tRNA(Ala) + L-alanine + ATP = L-alanyl-tRNA(Ala) + AMP + diphosphate. Functionally, catalyzes the attachment of alanine to tRNA(Ala) in a two-step reaction: alanine is first activated by ATP to form Ala-AMP and then transferred to the acceptor end of tRNA(Ala). Also edits incorrectly charged Ser-tRNA(Ala) and Gly-tRNA(Ala) via its editing domain. This chain is Alanine--tRNA ligase, found in Psychromonas ingrahamii (strain DSM 17664 / CCUG 51855 / 37).